Reading from the N-terminus, the 179-residue chain is MDCLRKQAEKIPILDAIEKRMNIRKEYALLGISFFCLVIIMATSLGPLITSTVGIIVPLQETLVILRQVNPKKDEAKHMLVFWMVFGILTSLDAYSGAIISFIPLWYTMKFFFLLWAGPLKFRGGIIIYDNILARIPEKWYREEGGIEHAVKKATDAVKTVAESEFNKKDVIESSKKTD.

The next 3 membrane-spanning stretches (helical) occupy residues 29 to 49 (LLGI…GPLI), 76 to 96 (AKHM…DAYS), and 97 to 117 (GAII…LLWA).

Belongs to the DP1 family.

It is found in the membrane. This is an uncharacterized protein from Encephalitozoon cuniculi (strain GB-M1) (Microsporidian parasite).